A 298-amino-acid chain; its full sequence is Tyrosine recombinase XerD (298 aa).

Residues 3–88 (SSHNNLLQNF…AIRQFYKFLK (86 aa)) form the Core-binding (CB) domain. In terms of domain architecture, Tyr recombinase spans 109 to 292 (SIPDYLTQDE…ANKTLREVHK (184 aa)). Residues arginine 149, lysine 173, histidine 244, arginine 247, and histidine 270 contribute to the active site. The active-site O-(3'-phospho-DNA)-tyrosine intermediate is tyrosine 279.

This sequence belongs to the 'phage' integrase family. XerD subfamily. Forms a cyclic heterotetrameric complex composed of two molecules of XerC and two molecules of XerD.

It localises to the cytoplasm. Its function is as follows. Site-specific tyrosine recombinase, which acts by catalyzing the cutting and rejoining of the recombining DNA molecules. The XerC-XerD complex is essential to convert dimers of the bacterial chromosome into monomers to permit their segregation at cell division. It also contributes to the segregational stability of plasmids. The sequence is that of Tyrosine recombinase XerD from Leptospira interrogans serogroup Icterohaemorrhagiae serovar copenhageni (strain Fiocruz L1-130).